A 419-amino-acid chain; its full sequence is UPF0761 membrane protein ACIAD3168 (419 aa).

A run of 6 helical transmembrane segments spans residues alanine 42–isoleucine 62, leucine 105–glutamate 125, tryptophan 148–valine 168, alanine 186–tryptophan 206, threonine 212–leucine 232, and alanine 252–leucine 272.

This sequence belongs to the UPF0761 family.

The protein localises to the cell inner membrane. The sequence is that of UPF0761 membrane protein ACIAD3168 from Acinetobacter baylyi (strain ATCC 33305 / BD413 / ADP1).